The primary structure comprises 622 residues: uncharacterized protein (622 aa).

The first 20 residues, 1 to 20 (MKIKAVAIFLSLLMIISLFS), serve as a signal peptide directing secretion.

This is an uncharacterized protein from Methanocaldococcus jannaschii (strain ATCC 43067 / DSM 2661 / JAL-1 / JCM 10045 / NBRC 100440) (Methanococcus jannaschii).